Reading from the N-terminus, the 424-residue chain is GTPase Obg (424 aa).

The Obg domain occupies 1–160 (MFDRVEIRIK…YELILELKLI (160 aa)). The OBG-type G domain maps to 161-328 (ADVAIIGYPN…LLDKVAEKLA (168 aa)). GTP-binding positions include 167–174 (GYPNVGKS), 192–196 (FTTLS), 213–216 (EVPG), 280–283 (NKID), and 309–311 (SAL). Residues serine 174 and threonine 194 each coordinate Mg(2+). Residues 349–424 (PAPKGKMGFH…IITGRLEWYL (76 aa)) form the OCT domain.

The protein belongs to the TRAFAC class OBG-HflX-like GTPase superfamily. OBG GTPase family. As to quaternary structure, monomer. The cofactor is Mg(2+).

Its subcellular location is the cytoplasm. An essential GTPase which binds GTP, GDP and possibly (p)ppGpp with moderate affinity, with high nucleotide exchange rates and a fairly low GTP hydrolysis rate. Plays a role in control of the cell cycle, stress response, ribosome biogenesis and in those bacteria that undergo differentiation, in morphogenesis control. This is GTPase Obg from Dehalococcoides mccartyi (strain ATCC BAA-2266 / KCTC 15142 / 195) (Dehalococcoides ethenogenes (strain 195)).